Reading from the N-terminus, the 357-residue chain is S-adenosylmethionine:tRNA ribosyltransferase-isomerase (357 aa).

The protein belongs to the QueA family. As to quaternary structure, monomer.

It is found in the cytoplasm. It carries out the reaction 7-aminomethyl-7-carbaguanosine(34) in tRNA + S-adenosyl-L-methionine = epoxyqueuosine(34) in tRNA + adenine + L-methionine + 2 H(+). It functions in the pathway tRNA modification; tRNA-queuosine biosynthesis. In terms of biological role, transfers and isomerizes the ribose moiety from AdoMet to the 7-aminomethyl group of 7-deazaguanine (preQ1-tRNA) to give epoxyqueuosine (oQ-tRNA). In Phenylobacterium zucineum (strain HLK1), this protein is S-adenosylmethionine:tRNA ribosyltransferase-isomerase.